Reading from the N-terminus, the 295-residue chain is MPWIQIKLNATNENAELIGDMLMEETGALSVTFLDAHDTPVFEPLPGETRLWGDTDVLALYDAEADTQLIMSQIKASNMLAEGFAYKIEQLEDKDWEREWMDNFHPMKFGQRLWICPSWRDIPDPTAVNVMLDPGLAFGTGTHPTTALCLEWLESLDLSGKTVIDFGCGSGILAIAAIKLGAEKVIGIDIDPQALLASKDNAQRNGVADQLDVYLPQDQPEGLLADVVVANILAAPLRELSSIIKGLVKPNGQLAMSGVLDTQAEDVANYYRDELHIDPIVEQSEWCRISGRKQG.

Residues threonine 146, glycine 167, aspartate 189, and asparagine 231 each coordinate S-adenosyl-L-methionine.

Belongs to the methyltransferase superfamily. PrmA family.

Its subcellular location is the cytoplasm. The catalysed reaction is L-lysyl-[protein] + 3 S-adenosyl-L-methionine = N(6),N(6),N(6)-trimethyl-L-lysyl-[protein] + 3 S-adenosyl-L-homocysteine + 3 H(+). In terms of biological role, methylates ribosomal protein L11. The polypeptide is Ribosomal protein L11 methyltransferase (Vibrio vulnificus (strain CMCP6)).